We begin with the raw amino-acid sequence, 294 residues long: N-acetylmuramic acid 6-phosphate etherase (294 aa).

Residues 54–217 enclose the SIS domain; it reads VIQSFEEEGR…STASMIGVGK (164 aa). Catalysis depends on glutamate 82, which acts as the Proton donor. The active site involves glutamate 113.

The protein belongs to the GCKR-like family. MurNAc-6-P etherase subfamily. Homodimer.

The enzyme catalyses N-acetyl-D-muramate 6-phosphate + H2O = N-acetyl-D-glucosamine 6-phosphate + (R)-lactate. It participates in amino-sugar metabolism; N-acetylmuramate degradation. Specifically catalyzes the cleavage of the D-lactyl ether substituent of MurNAc 6-phosphate, producing GlcNAc 6-phosphate and D-lactate. This is N-acetylmuramic acid 6-phosphate etherase from Bacillus cereus (strain 03BB102).